An 888-amino-acid chain; its full sequence is Interference hedgehog (888 aa).

The first 24 residues, 1–24 (MSLTRFSLCLLLTLLLAAIPVYLA), serve as a signal peptide directing secretion. Over 25–688 (SPDPGVRILR…SHNETFNLNP (664 aa)) the chain is Extracellular. Ig-like C2-type domains lie at 28-123 (PGVR…ARLE), 134-215 (EGFK…VRLA), 234-321 (PHLL…SIQL), and 327-414 (PRIV…LQVN). Disulfide bonds link cysteine 51-cysteine 106, cysteine 155-cysteine 203, and cysteine 257-cysteine 305. N-linked (GlcNAc...) asparagine glycosylation is found at asparagine 80, asparagine 185, asparagine 192, asparagine 281, asparagine 336, asparagine 365, asparagine 369, and asparagine 455. Cysteine 348 and cysteine 396 form a disulfide bridge. Fibronectin type-III domains follow at residues 450–557 (PPSA…LQRG) and 565–660 (VPSL…TQRP). Positions 486 and 493 each coordinate heparin. An N-linked (GlcNAc...) asparagine glycan is attached at asparagine 516. A heparin-binding site is contributed by arginine 531. The N-linked (GlcNAc...) asparagine glycan is linked to asparagine 547. Over residues 655-667 (GRTQRPRVSTTTE) the composition is skewed to polar residues. The segment at 655 to 679 (GRTQRPRVSTTTEPAVHAMDTTTPS) is disordered. An N-linked (GlcNAc...) asparagine glycan is attached at asparagine 681. The chain crosses the membrane as a helical span at residues 689-709 (LLTGTIGGGALLVLLVVSACL). Residues 710–888 (CLCRRRSSRG…SSGSLNSVGV (179 aa)) are Cytoplasmic-facing. Disordered stretches follow at residues 759 to 789 (AQQQ…DMSY), 812 to 864 (SSSL…PGRV), and 869 to 888 (ARLS…SVGV). Low complexity predominate over residues 760–775 (QQQQQQQQQQQQQQQQ). Polar residues predominate over residues 843 to 859 (QPTDGSTADSPRLQASN). The segment covering 872–888 (SSRSENLSSGSLNSVGV) has biased composition (low complexity).

Belongs to the immunoglobulin superfamily. IHOG family. As to quaternary structure, homodimer. Heterotetramer; 2 iHog chains bind 2 hh chains when facilitated by heparin, heparin is required to promote high-affinity interactions between hh and iHog.

The protein resides in the membrane. Mediates response to the active Hedgehog (Hh) protein signal in embryos, functioning upstream or at the level of patched (ptc). This chain is Interference hedgehog, found in Drosophila grimshawi (Hawaiian fruit fly).